A 63-amino-acid polypeptide reads, in one-letter code: Arabinogalactan protein 22 (63 aa).

Positions 1–27 (MASLKFPLEILAVFVIISVILLPIAQS) are cleaved as a signal peptide. 4-hydroxyproline is present on residues proline 32, proline 34, and proline 36. Proline 32, proline 34, and proline 36 each carry an O-linked (Ara...) hydroxyproline glycan. Serine 38 carries the GPI-anchor amidated serine lipid modification. Residues 39-63 (DGTSIDQGIAYVLMMVALALTYFIH) constitute a propeptide, removed in mature form.

This sequence belongs to the AG-peptide AGP family. In terms of processing, contains 4-hydroxyproline; hydroxylated on Pro-32, Pro-34 and Pro-36. Post-translationally, O-glycosylated on hydroxyprolines; noncontiguous hydroxylproline residues are glycosylated with arabinogalactan.

Its subcellular location is the cell membrane. Its function is as follows. Proteoglycan that seems to be implicated in diverse developmental roles such as differentiation, cell-cell recognition, embryogenesis and programmed cell death. This Arabidopsis thaliana (Mouse-ear cress) protein is Arabinogalactan protein 22.